A 276-amino-acid polypeptide reads, in one-letter code: Large ribosomal subunit protein uL2 (276 aa).

The disordered stretch occupies residues 219-276 (TVRGSAMNPNDHPHGGGEGRSPIGRPSPVTPWGKPALGYKTRKKNKHSDKFIVTGRKR).

This sequence belongs to the universal ribosomal protein uL2 family. As to quaternary structure, part of the 50S ribosomal subunit. Forms a bridge to the 30S subunit in the 70S ribosome.

Functionally, one of the primary rRNA binding proteins. Required for association of the 30S and 50S subunits to form the 70S ribosome, for tRNA binding and peptide bond formation. It has been suggested to have peptidyltransferase activity; this is somewhat controversial. Makes several contacts with the 16S rRNA in the 70S ribosome. The protein is Large ribosomal subunit protein uL2 of Alkaliphilus metalliredigens (strain QYMF).